The primary structure comprises 335 residues: Beta-1,4-mannooligosaccharide phosphorylase (335 aa).

This sequence belongs to the glycosyl hydrolase 130 family. In terms of assembly, homohexamer in solution.

It carries out the reaction [(1-&gt;4)-beta-D-mannosyl](n) + phosphate = [(1-&gt;4)-beta-D-mannosyl](n-1) + alpha-D-mannose 1-phosphate. Functionally, catalyzes the phosphorolysis of beta-1,4-mannooligosaccharides to mannose 1-phosphate (Man1P) and shorter mannooligosaccharides. Can also catalyze the phosphorolysis of 4-O-beta-D-mannopyranosyl-D-glucopyranose (Man-Glc), but shows higher activity toward longer mannooligosaccharides. Involved in a mannan catabolic pathway which feeds into glycolysis. This chain is Beta-1,4-mannooligosaccharide phosphorylase, found in Ruminococcus albus (strain ATCC 27210 / DSM 20455 / JCM 14654 / NCDO 2250 / 7).